A 399-amino-acid polypeptide reads, in one-letter code: Glutathione S-transferase LANCL1 (399 aa).

Alanine 2 bears the N-acetylalanine mark. Lysine 142 is subject to N6-acetyllysine. Position 276 (cysteine 276) interacts with Zn(2+). Residue lysine 317 coordinates glutathione. Zn(2+)-binding residues include cysteine 322 and histidine 323. Residue 364 to 367 (RTPD) participates in glutathione binding.

The protein belongs to the LanC-like protein family. In terms of assembly, interacts with the C-terminal of STOM. Interacts with the EPS8 SH3 domain. Interaction with EPS8 is inhibited by glutathione binding. In terms of tissue distribution, expressed in brain.

The protein resides in the cytoplasm. Its subcellular location is the cell membrane. The enzyme catalyses RX + glutathione = an S-substituted glutathione + a halide anion + H(+). It carries out the reaction 1-chloro-2,4-dinitrobenzene + glutathione = 2,4-dinitrophenyl-S-glutathione + chloride + H(+). Its function is as follows. Functions as a glutathione transferase. Catalyzes conjugation of the glutathione (GSH) to artificial substrates 1-chloro-2,4-dinitrobenzene (CDNB) and p-nitrophenyl acetate. Mitigates neuronal oxidative stress during normal postnatal development and in response to oxidative stresses probably through GSH antioxidant defense mechanism. May play a role in EPS8 signaling. Binds glutathione. This chain is Glutathione S-transferase LANCL1 (LANCL1), found in Bos taurus (Bovine).